We begin with the raw amino-acid sequence, 293 residues long: C-type lectin domain family 4 member G (293 aa).

Residues 1-31 (MDTTRYSKWGGSSEEVPGGPWGRWVHWSRRP) are Cytoplasmic-facing. Position 12 is a phosphoserine (Ser-12). The helical; Signal-anchor for type II membrane protein transmembrane segment at 32–52 (LFLALAVLVTTVLWAVILSIL) threads the bilayer. Topologically, residues 53 to 293 (LSKASTERAA…GWICEKRHNC (241 aa)) are extracellular. The N-linked (GlcNAc...) asparagine glycan is linked to Asn-73. Residues 96–136 (SGTQAQLQTTRAELGEAQAKLMEQESALRELRERVTQGLAE) adopt a coiled-coil conformation. Asn-159 carries N-linked (GlcNAc...) asparagine glycosylation. The C-type lectin domain maps to 172-287 (FEGSCYFFSV…CDSEKDGWIC (116 aa)). Cys-264 and Cys-278 are disulfide-bonded.

(Microbial infection) Interacts with Japanese encephalitis virus envelope protein E. As to quaternary structure, (Microbial infection) Interacts with ebolavirus glycoprotein. In terms of assembly, (Microbial infection) Interacts with SARS-CoV spike glycoprotein. (Microbial infection) Interacts with lassa virus and Lymphocytic choriomeningitis virus glycoprotein. Expressed exclusively in fetal and adult liver and in lymph nodes. Specifically expressed by endothelial cells lining lymph node and liver sinuses (at protein level).

The protein resides in the cell membrane. Its function is as follows. Binds mannose, N-acetylglucosamine (GlcNAc) and fucose, but not galactose, in a Ca(2+)-dependent manner, in vitro. (Microbial infection) Acts as a receptor for Japanese encephalitis virus. Functionally, (Microbial infection) Acts as a receptor for Ebolavirus. In terms of biological role, (Microbial infection) Acts as a receptor for SARS-CoV. Its function is as follows. (Microbial infection) Acts as a receptor for Lassa virus and Lymphocytic choriomeningitis virus glycoprotein. This is C-type lectin domain family 4 member G (CLEC4G) from Homo sapiens (Human).